Reading from the N-terminus, the 172-residue chain is 3-hydroxydecanoyl-[acyl-carrier-protein] dehydratase (172 aa).

His70 is an active-site residue.

This sequence belongs to the thioester dehydratase family. FabA subfamily. As to quaternary structure, homodimer.

It localises to the cytoplasm. The catalysed reaction is a (3R)-hydroxyacyl-[ACP] = a (2E)-enoyl-[ACP] + H2O. The enzyme catalyses (3R)-hydroxydecanoyl-[ACP] = (2E)-decenoyl-[ACP] + H2O. It carries out the reaction (2E)-decenoyl-[ACP] = (3Z)-decenoyl-[ACP]. Its pathway is lipid metabolism; fatty acid biosynthesis. Necessary for the introduction of cis unsaturation into fatty acids. Catalyzes the dehydration of (3R)-3-hydroxydecanoyl-ACP to E-(2)-decenoyl-ACP and then its isomerization to Z-(3)-decenoyl-ACP. Can catalyze the dehydratase reaction for beta-hydroxyacyl-ACPs with saturated chain lengths up to 16:0, being most active on intermediate chain length. This chain is 3-hydroxydecanoyl-[acyl-carrier-protein] dehydratase, found in Xylella fastidiosa (strain M12).